The sequence spans 266 residues: Large ribosomal subunit protein uL3 (266 aa).

The disordered stretch occupies residues 124–149; sequence NQKIGPKSHGGGGGSKPVRQTGSLGD.

This sequence belongs to the universal ribosomal protein uL3 family. Part of the 50S ribosomal subunit. Forms a cluster with proteins L14 and L19.

In terms of biological role, one of the primary rRNA binding proteins, it binds directly near the 3'-end of the 23S rRNA, where it nucleates assembly of the 50S subunit. The polypeptide is Large ribosomal subunit protein uL3 (Mycoplasmopsis pulmonis (strain UAB CTIP) (Mycoplasma pulmonis)).